A 687-amino-acid chain; its full sequence is Glycine--tRNA ligase beta subunit (687 aa).

It belongs to the class-II aminoacyl-tRNA synthetase family. In terms of assembly, tetramer of two alpha and two beta subunits.

The protein resides in the cytoplasm. The catalysed reaction is tRNA(Gly) + glycine + ATP = glycyl-tRNA(Gly) + AMP + diphosphate. The protein is Glycine--tRNA ligase beta subunit of Lactobacillus helveticus (strain DPC 4571).